The primary structure comprises 261 residues: Zinc finger protein 664 (261 aa).

9 consecutive C2H2-type zinc fingers follow at residues 3–25, 31–53, 59–81, 87–109, 115–137, 143–165, 171–193, 199–221, and 227–249; these read YKCP…QKIH, HKCD…WRDH, YKCD…KKIH, YKCY…MRVH, YVCS…QRVH, FKCE…QRVH, YKCY…QRVH, YRCC…QRVH, and FKCD…QRVH. A Glycyl lysine isopeptide (Lys-Gly) (interchain with G-Cter in SUMO2) cross-link involves residue K257.

It belongs to the krueppel C2H2-type zinc-finger protein family.

Its subcellular location is the nucleus. In terms of biological role, may be involved in transcriptional regulation. This Homo sapiens (Human) protein is Zinc finger protein 664.